A 163-amino-acid polypeptide reads, in one-letter code: Protein-export protein SecB (163 aa).

The protein belongs to the SecB family. As to quaternary structure, homotetramer, a dimer of dimers. One homotetramer interacts with 1 SecA dimer.

It is found in the cytoplasm. Functionally, one of the proteins required for the normal export of preproteins out of the cell cytoplasm. It is a molecular chaperone that binds to a subset of precursor proteins, maintaining them in a translocation-competent state. It also specifically binds to its receptor SecA. This is Protein-export protein SecB from Shewanella woodyi (strain ATCC 51908 / MS32).